The following is a 295-amino-acid chain: 4-diphosphocytidyl-2-C-methyl-D-erythritol kinase (295 aa).

The active site involves Lys18. ATP is bound at residue Pro101–Ser111. Residue Asp143 is part of the active site.

Belongs to the GHMP kinase family. IspE subfamily.

It carries out the reaction 4-CDP-2-C-methyl-D-erythritol + ATP = 4-CDP-2-C-methyl-D-erythritol 2-phosphate + ADP + H(+). It functions in the pathway isoprenoid biosynthesis; isopentenyl diphosphate biosynthesis via DXP pathway; isopentenyl diphosphate from 1-deoxy-D-xylulose 5-phosphate: step 3/6. Functionally, catalyzes the phosphorylation of the position 2 hydroxy group of 4-diphosphocytidyl-2C-methyl-D-erythritol. The sequence is that of 4-diphosphocytidyl-2-C-methyl-D-erythritol kinase from Vibrio cholerae serotype O1 (strain ATCC 39315 / El Tor Inaba N16961).